Reading from the N-terminus, the 547-residue chain is Glucose-6-phosphate isomerase (547 aa).

The active-site Proton donor is the E356. Catalysis depends on residues H387 and K508.

This sequence belongs to the GPI family.

It localises to the cytoplasm. The catalysed reaction is alpha-D-glucose 6-phosphate = beta-D-fructose 6-phosphate. It participates in carbohydrate biosynthesis; gluconeogenesis. The protein operates within carbohydrate degradation; glycolysis; D-glyceraldehyde 3-phosphate and glycerone phosphate from D-glucose: step 2/4. Its function is as follows. Catalyzes the reversible isomerization of glucose-6-phosphate to fructose-6-phosphate. The sequence is that of Glucose-6-phosphate isomerase from Cupriavidus taiwanensis (strain DSM 17343 / BCRC 17206 / CCUG 44338 / CIP 107171 / LMG 19424 / R1) (Ralstonia taiwanensis (strain LMG 19424)).